The following is a 265-amino-acid chain: Tryptophan synthase alpha chain (265 aa).

Active-site proton acceptor residues include glutamate 49 and aspartate 60.

It belongs to the TrpA family. Tetramer of two alpha and two beta chains.

It catalyses the reaction (1S,2R)-1-C-(indol-3-yl)glycerol 3-phosphate + L-serine = D-glyceraldehyde 3-phosphate + L-tryptophan + H2O. The protein operates within amino-acid biosynthesis; L-tryptophan biosynthesis; L-tryptophan from chorismate: step 5/5. The alpha subunit is responsible for the aldol cleavage of indoleglycerol phosphate to indole and glyceraldehyde 3-phosphate. This is Tryptophan synthase alpha chain from Ralstonia nicotianae (strain ATCC BAA-1114 / GMI1000) (Ralstonia solanacearum).